A 29-amino-acid chain; its full sequence is Trypsin inhibitor 1 (29 aa).

3 cysteine pairs are disulfide-bonded: cysteine 3–cysteine 20, cysteine 10–cysteine 22, and cysteine 16–cysteine 28.

The protein belongs to the protease inhibitor I7 (squash-type serine protease inhibitor) family.

It localises to the secreted. In terms of biological role, inhibits trypsin. The sequence is that of Trypsin inhibitor 1 from Momordica repens.